The sequence spans 430 residues: Histidinol dehydrogenase (430 aa).

NAD(+) contacts are provided by Tyr-131, Gln-192, and Asn-215. Substrate-binding residues include Ser-238, Gln-260, and His-263. Residues Gln-260 and His-263 each contribute to the Zn(2+) site. Catalysis depends on proton acceptor residues Glu-328 and His-329. His-329, Asp-362, Glu-416, and His-421 together coordinate substrate. Residue Asp-362 coordinates Zn(2+). His-421 contacts Zn(2+).

Belongs to the histidinol dehydrogenase family. Zn(2+) is required as a cofactor.

It catalyses the reaction L-histidinol + 2 NAD(+) + H2O = L-histidine + 2 NADH + 3 H(+). Its pathway is amino-acid biosynthesis; L-histidine biosynthesis; L-histidine from 5-phospho-alpha-D-ribose 1-diphosphate: step 9/9. In terms of biological role, catalyzes the sequential NAD-dependent oxidations of L-histidinol to L-histidinaldehyde and then to L-histidine. The protein is Histidinol dehydrogenase of Acinetobacter baylyi (strain ATCC 33305 / BD413 / ADP1).